Consider the following 158-residue polypeptide: Ribosomal RNA large subunit methyltransferase H (158 aa).

Residues Leu-72, Gly-103, and 122–127 (LGNLTL) contribute to the S-adenosyl-L-methionine site.

Belongs to the RNA methyltransferase RlmH family. In terms of assembly, homodimer.

It localises to the cytoplasm. It catalyses the reaction pseudouridine(1915) in 23S rRNA + S-adenosyl-L-methionine = N(3)-methylpseudouridine(1915) in 23S rRNA + S-adenosyl-L-homocysteine + H(+). In terms of biological role, specifically methylates the pseudouridine at position 1915 (m3Psi1915) in 23S rRNA. The sequence is that of Ribosomal RNA large subunit methyltransferase H from Acidiphilium cryptum (strain JF-5).